The primary structure comprises 161 residues: Allophycocyanin alpha chain (161 aa).

Asn71 is subject to N4-methylasparagine. Cys81 is a (2R,3E)-phycocyanobilin binding site.

The protein belongs to the phycobiliprotein family. As to quaternary structure, heterodimer of an alpha and a beta chain. Contains one covalently linked phycocyanobilin chromophore.

It is found in the plastid. Its subcellular location is the cyanelle thylakoid membrane. Its function is as follows. Light-harvesting photosynthetic bile pigment-protein from the phycobiliprotein complex. Allophycocyanin has a maximum absorption at approximately 650 nanometers. The protein is Allophycocyanin alpha chain (apcA) of Cyanophora paradoxa.